We begin with the raw amino-acid sequence, 544 residues long: CTP synthase (544 aa).

The segment at 1 to 265 is amidoligase domain; sequence MARFIFITGG…DEAVLSAFGI (265 aa). Ser13 lines the CTP pocket. A UTP-binding site is contributed by Ser13. An ATP-binding site is contributed by 14-19; it reads SLGKGL. Tyr54 serves as a coordination point for L-glutamine. Asp71 is an ATP binding site. The Mg(2+) site is built by Asp71 and Glu139. CTP-binding positions include 146-148, 186-191, and Lys222; these read DIE and KTKPTQ. Residues 186–191 and Lys222 each bind UTP; that span reads KTKPTQ. A Glutamine amidotransferase type-1 domain is found at 291-543; it reads TIGVVGKYVG…IAAALQQSRL (253 aa). Residue Gly355 coordinates L-glutamine. The active-site Nucleophile; for glutamine hydrolysis is Cys382. L-glutamine-binding positions include 383 to 386, Glu406, and Arg471; that span reads LGMQ. Active-site residues include His516 and Glu518.

Belongs to the CTP synthase family. In terms of assembly, homotetramer.

The catalysed reaction is UTP + L-glutamine + ATP + H2O = CTP + L-glutamate + ADP + phosphate + 2 H(+). It catalyses the reaction L-glutamine + H2O = L-glutamate + NH4(+). The enzyme catalyses UTP + NH4(+) + ATP = CTP + ADP + phosphate + 2 H(+). Its pathway is pyrimidine metabolism; CTP biosynthesis via de novo pathway; CTP from UDP: step 2/2. Its activity is regulated as follows. Allosterically activated by GTP, when glutamine is the substrate; GTP has no effect on the reaction when ammonia is the substrate. The allosteric effector GTP functions by stabilizing the protein conformation that binds the tetrahedral intermediate(s) formed during glutamine hydrolysis. Inhibited by the product CTP, via allosteric rather than competitive inhibition. Its function is as follows. Catalyzes the ATP-dependent amination of UTP to CTP with either L-glutamine or ammonia as the source of nitrogen. Regulates intracellular CTP levels through interactions with the four ribonucleotide triphosphates. This Rhizorhabdus wittichii (strain DSM 6014 / CCUG 31198 / JCM 15750 / NBRC 105917 / EY 4224 / RW1) (Sphingomonas wittichii) protein is CTP synthase.